A 416-amino-acid polypeptide reads, in one-letter code: tRNA(Met) cytidine acetate ligase (416 aa).

ATP is bound by residues 7 to 20 (VVEYNPFHNGHLHH), Gly101, Asn162, and 187 to 188 (RI).

This sequence belongs to the TmcAL family.

The protein localises to the cytoplasm. The catalysed reaction is cytidine(34) in elongator tRNA(Met) + acetate + ATP = N(4)-acetylcytidine(34) in elongator tRNA(Met) + AMP + diphosphate. Functionally, catalyzes the formation of N(4)-acetylcytidine (ac(4)C) at the wobble position of elongator tRNA(Met), using acetate and ATP as substrates. First activates an acetate ion to form acetyladenylate (Ac-AMP) and then transfers the acetyl group to tRNA to form ac(4)C34. This is tRNA(Met) cytidine acetate ligase from Halalkalibacterium halodurans (strain ATCC BAA-125 / DSM 18197 / FERM 7344 / JCM 9153 / C-125) (Bacillus halodurans).